The chain runs to 551 residues: Adenine deaminase (551 aa).

The protein belongs to the metallo-dependent hydrolases superfamily. Adenine deaminase family. Requires Mn(2+) as cofactor.

The catalysed reaction is adenine + H2O + H(+) = hypoxanthine + NH4(+). The protein is Adenine deaminase of Leuconostoc mesenteroides subsp. mesenteroides (strain ATCC 8293 / DSM 20343 / BCRC 11652 / CCM 1803 / JCM 6124 / NCDO 523 / NBRC 100496 / NCIMB 8023 / NCTC 12954 / NRRL B-1118 / 37Y).